The primary structure comprises 245 residues: uncharacterized protein (245 aa).

A coiled-coil region spans residues 33 to 176 (QRAAYQQVQA…SSQRDMLTAT (144 aa)).

This is an uncharacterized protein from Mycobacterium tuberculosis (strain CDC 1551 / Oshkosh).